A 119-amino-acid chain; its full sequence is Large ribosomal subunit protein bL19 (119 aa).

The protein belongs to the bacterial ribosomal protein bL19 family.

This protein is located at the 30S-50S ribosomal subunit interface and may play a role in the structure and function of the aminoacyl-tRNA binding site. In Sulfurovum sp. (strain NBC37-1), this protein is Large ribosomal subunit protein bL19.